A 369-amino-acid polypeptide reads, in one-letter code: DNA replication and repair protein RecF (369 aa).

Residue 30–37 coordinates ATP; the sequence is GDNGSGKT.

Belongs to the RecF family.

Its subcellular location is the cytoplasm. The RecF protein is involved in DNA metabolism; it is required for DNA replication and normal SOS inducibility. RecF binds preferentially to single-stranded, linear DNA. It also seems to bind ATP. The polypeptide is DNA replication and repair protein RecF (Pseudomonas aeruginosa (strain UCBPP-PA14)).